Reading from the N-terminus, the 193-residue chain is UPF0397 protein PA0141 (193 aa).

5 helical membrane passes run 11–31 (VTIA…SIPI), 43–63 (FLVF…GLLG), 69–89 (FFLF…LGFL), 109–129 (ILFF…LIAP), and 147–167 (GFLV…FLMS).

The protein belongs to the UPF0397 family.

The protein localises to the cell membrane. The sequence is that of UPF0397 protein PA0141 from Phytoplasma australiense.